A 327-amino-acid chain; its full sequence is ATPase GET3 (327 aa).

27–34 (KGGVGKTT) lines the ATP pocket. Aspartate 56 is a catalytic residue. ATP is bound by residues glutamate 231 and asparagine 258. Residues cysteine 269 and cysteine 272 each contribute to the Zn(2+) site.

Belongs to the arsA ATPase family. As to quaternary structure, homodimer. Component of the Golgi to ER traffic (GET) complex, which is composed of GET1, GET2 and GET3. Within the complex, GET1 and GET2 form a heterotetramer which is stabilized by phosphatidylinositol binding and which binds to the GET3 homodimer. Interacts with the chloride channel protein GEF1.

It localises to the cytoplasm. The protein localises to the endoplasmic reticulum. The protein resides in the golgi apparatus. ATPase required for the post-translational delivery of tail-anchored (TA) proteins to the endoplasmic reticulum. Recognizes and selectively binds the transmembrane domain of TA proteins in the cytosol. This complex then targets to the endoplasmic reticulum by membrane-bound receptors GET1 and GET2, where the tail-anchored protein is released for insertion. This process is regulated by ATP binding and hydrolysis. ATP binding drives the homodimer towards the closed dimer state, facilitating recognition of newly synthesized TA membrane proteins. ATP hydrolysis is required for insertion. Subsequently, the homodimer reverts towards the open dimer state, lowering its affinity for the GET1-GET2 receptor, and returning it to the cytosol to initiate a new round of targeting. Cooperates with the HDEL receptor ERD2 to mediate the ATP-dependent retrieval of resident ER proteins that contain a C-terminal H-D-E-L retention signal from the Golgi to the ER. Involved in low-level resistance to the oxyanions arsenite and arsenate, and in heat tolerance. In Yarrowia lipolytica (strain CLIB 122 / E 150) (Yeast), this protein is ATPase GET3.